A 127-amino-acid chain; its full sequence is Large ribosomal subunit protein eL8 (127 aa).

The protein belongs to the eukaryotic ribosomal protein eL8 family. In terms of assembly, part of the 50S ribosomal subunit. Probably part of the RNase P complex.

It is found in the cytoplasm. In terms of biological role, multifunctional RNA-binding protein that recognizes the K-turn motif in ribosomal RNA, the RNA component of RNase P, box H/ACA, box C/D and box C'/D' sRNAs. The polypeptide is Large ribosomal subunit protein eL8 (Picrophilus torridus (strain ATCC 700027 / DSM 9790 / JCM 10055 / NBRC 100828 / KAW 2/3)).